Consider the following 332-residue polypeptide: 2,3-diketo-L-gulonate reductase (332 aa).

His44 functions as the Proton donor in the catalytic mechanism. NAD(+)-binding positions include 168–174, 224–225, and 304–306; these read ITMVDMS, WK, and GHE.

The protein belongs to the LDH2/MDH2 oxidoreductase family. DlgD subfamily. Homodimer.

The protein localises to the cytoplasm. The catalysed reaction is 3-dehydro-L-gulonate + NAD(+) = 2,3-dioxo-L-gulonate + NADH + H(+). It catalyses the reaction 3-dehydro-L-gulonate + NADP(+) = 2,3-dioxo-L-gulonate + NADPH + H(+). In terms of biological role, catalyzes the reduction of 2,3-diketo-L-gulonate in the presence of NADH, to form 3-keto-L-gulonate. This Mannheimia succiniciproducens (strain KCTC 0769BP / MBEL55E) protein is 2,3-diketo-L-gulonate reductase.